The sequence spans 335 residues: Adenine deaminase (335 aa).

3 residues coordinate Zn(2+): His17, His19, and His197. The Proton donor role is filled by Glu200. Asp278 is a binding site for Zn(2+). A substrate-binding site is contributed by Asp279.

It belongs to the metallo-dependent hydrolases superfamily. Adenosine and AMP deaminases family. Adenine deaminase type 2 subfamily. The cofactor is Zn(2+).

The catalysed reaction is adenine + H2O + H(+) = hypoxanthine + NH4(+). In terms of biological role, catalyzes the hydrolytic deamination of adenine to hypoxanthine. Plays an important role in the purine salvage pathway and in nitrogen catabolism. This is Adenine deaminase from Marinomonas sp. (strain MWYL1).